We begin with the raw amino-acid sequence, 179 residues long: Large ribosomal subunit protein uL5 (179 aa).

The protein belongs to the universal ribosomal protein uL5 family. In terms of assembly, part of the 50S ribosomal subunit; part of the 5S rRNA/L5/L18/L25 subcomplex. Contacts the 5S rRNA and the P site tRNA. Forms a bridge to the 30S subunit in the 70S ribosome.

Functionally, this is one of the proteins that bind and probably mediate the attachment of the 5S RNA into the large ribosomal subunit, where it forms part of the central protuberance. In the 70S ribosome it contacts protein S13 of the 30S subunit (bridge B1b), connecting the 2 subunits; this bridge is implicated in subunit movement. Contacts the P site tRNA; the 5S rRNA and some of its associated proteins might help stabilize positioning of ribosome-bound tRNAs. In Burkholderia multivorans (strain ATCC 17616 / 249), this protein is Large ribosomal subunit protein uL5.